Reading from the N-terminus, the 2319-residue chain is AT-rich interactive domain-containing protein 1B (2319 aa).

2 stretches are compositionally biased toward low complexity: residues 1-21 (MAAR…ARAG) and 43-56 (GARG…APGP). 6 disordered regions span residues 1 to 74 (MAAR…VHHH), 155 to 306 (VGEA…GGGG), 321 to 414 (APAS…GAGA), 487 to 546 (RFAG…AGAA), 577 to 1062 (QQRS…LMNT), and 1085 to 1129 (DMMS…KITK). Residue alanine 2 is modified to N-acetylalanine. Residues 57–68 (MLGGGGDGGGGL) are compositionally biased toward gly residues. The segment covering 165–188 (QQHHHHHHAHHHHHHAHHLHHHHA) has biased composition (basic residues). 2 stretches are compositionally biased toward low complexity: residues 189-215 (LQQQ…QQQH) and 343-363 (SPGM…PGSM). Residues 365–379 (PLQNSHEGYPNSQCN) show a composition bias toward polar residues. A compositionally biased stretch (gly residues) spans 388–414 (GAGGGGGGGGGGGGGSGGGGGGGGAGA). An Asymmetric dimethylarginine modification is found at arginine 487. A compositionally biased stretch (polar residues) spans 489 to 510 (AGQNQHPSGATPTLNQLLTSPS). An LXXLL motif is present at residues 502-506 (LNQLL). A compositionally biased stretch (low complexity) spans 536-546 (PQSQAAAAGAA). Residues serine 585 and serine 599 each carry the phosphoserine modification. Residue arginine 608 is modified to Asymmetric dimethylarginine. Residues 620–630 (SQPQQSSPYPG) show a composition bias toward low complexity. Arginine 640 is modified (asymmetric dimethylarginine). 6 stretches are compositionally biased toward low complexity: residues 651-670 (GAMA…YGQQ), 677-687 (QQGQQPYYSQQ), 695-712 (PQAQ…QPQQ), 767-783 (SSAV…GDQS), 811-832 (GSPV…IPGS), and 840-849 (GSQSESSSHP). A compositionally biased stretch (polar residues) spans 866–880 (TQRNPQMAQYGPQQT). The span at 881-892 (GPSMSPHPSPGG) shows a compositional bias: low complexity. Polar residues-rich tracts occupy residues 899–923 (SSFQ…QGNY) and 947–958 (SANNQMHGQGPS). Low complexity-rich tracts occupy residues 980–994 (PGNM…PGMS) and 1014–1028 (EAAA…NSAQ). The segment covering 1029–1062 (SRQGSFPGMNQSGLMASSSPYSQPMNNSSSLMNT) has biased composition (polar residues). The region spanning 1136–1227 (EPERKLWVDR…YLFAFECKIE (92 aa)) is the ARID domain. Disordered stretches follow at residues 1230-1334 (EEPP…QQGM), 1346-1443 (EPNK…PNYK), 1475-1647 (NQYG…FLPS), and 1782-1852 (DHNA…KQAS). Polar residues-rich tracts occupy residues 1254–1273 (ANSG…SNSM) and 1287–1304 (STPH…SSTI). A compositionally biased stretch (low complexity) spans 1305-1319 (SVHDPFSDVSDSSFP). 2 stretches are compositionally biased toward polar residues: residues 1320-1334 (KRNS…QQGM) and 1364-1388 (PFMT…SGAM). A compositionally biased stretch (low complexity) spans 1426–1440 (PPYGGHQPGLYPQQP). The Nuclear localization signal signature appears at 1441 to 1460 (NYKRHMDGMYGPPAKRHEGD). Polar residues-rich tracts occupy residues 1522–1534 (LQSS…QQNM) and 1579–1601 (ESQW…SMQP). Residues serine 1625, serine 1638, and serine 1642 each carry the phosphoserine modification. Residues 1627-1641 (ASFQRSLENRMSPSK) are compositionally biased toward polar residues. A compositionally biased stretch (basic and acidic residues) spans 1782–1791 (DHNAARKDDS). Serine 1798 is subject to Phosphoserine. The segment covering 1799–1823 (GKEEEDAECIDDDEEDEEDEEEDSE) has biased composition (acidic residues). A compositionally biased stretch (basic and acidic residues) spans 1842–1852 (ADPKEKPKQAS). Lysine 1860 is subject to N6-acetyllysine. 2 disordered regions span residues 1904–1941 (FESK…QQEK) and 1954–1973 (RPGA…SSKF). The span at 1925–1940 (RKKEQEGKGDSEEQQE) shows a compositional bias: basic and acidic residues. The LXXLL signature appears at 2119 to 2123 (LDGLL).

In terms of assembly, component of SWI/SNF chromatin remodeling complexes, in some of which it can be mutually exclusive with ARID1B/BAF250B. The canonical complex contains a catalytic subunit (either SMARCA4/BRG1/BAF190A or SMARCA2/BRM/BAF190B) and at least SMARCE1, ACTL6A/BAF53, SMARCC1/BAF155, SMARCC2/BAF170, and SMARCB1/SNF5/BAF47. Other subunits specific to each of the complexes may also be present permitting several possible combinations developmentally and tissue specific. Component of the BAF (SWI/SNF-A) complex, which includes at least actin (ACTB), ARID1A/BAF250A, ARID1B/BAF250B, SMARCA2/BRM, SMARCA4/BRG1/BAF190A, ACTL6A/BAF53, ACTL6B/BAF53B, SMARCE1/BAF57, SMARCC1/BAF155, SMARCC2/BAF170, SMARCB1/SNF5/INI1, and one or more SMARCD1/BAF60A, SMARCD2/BAF60B, or SMARCD3/BAF60C. In muscle cells, the BAF complex also contains DPF3. Component of neural progenitors-specific chromatin remodeling complex (npBAF complex) composed of at least, ARID1A/BAF250A or ARID1B/BAF250B, SMARCD1/BAF60A, SMARCD3/BAF60C, SMARCA2/BRM/BAF190B, SMARCA4/BRG1/BAF190A, SMARCB1/BAF47, SMARCC1/BAF155, SMARCE1/BAF57, SMARCC2/BAF170, PHF10/BAF45A, ACTL6A/BAF53A and actin. Component of neuron-specific chromatin remodeling complex (nBAF complex) composed of at least, ARID1A/BAF250A or ARID1B/BAF250B, SMARCD1/BAF60A, SMARCD3/BAF60C, SMARCA2/BRM/BAF190B, SMARCA4/BRG1/BAF190A, SMARCB1/BAF47, SMARCC1/BAF155, SMARCE1/BAF57, SMARCC2/BAF170, DPF1/BAF45B, DPF3/BAF45C, ACTL6B/BAF53B and actin. Component of a SWI/SNF-like EBAFb complex, at least composed of SMARCA4/BRG1/BAF190A, SMARCB1/BAF47/SNF5, ACTL6A/BAF53A, SMARCE1/BAF57, SMARCD1/BAF60A, SMARCD2/BAF60B, SMARCC1/BAF155, SMARCC2/BAF170, ARID1B/BAF250B, MLLT1/ENL and actin. Interacts through its C-terminus with SMARCA2/BRM/BAF190B and SMARCA4/BRG1/BAF190A. Interacts with SMARCC1/BAF155. As to expression, widely expressed with high levels in heart, skeletal muscle and kidney.

It localises to the nucleus. Functionally, involved in transcriptional activation and repression of select genes by chromatin remodeling (alteration of DNA-nucleosome topology). Component of SWI/SNF chromatin remodeling complexes that carry out key enzymatic activities, changing chromatin structure by altering DNA-histone contacts within a nucleosome in an ATP-dependent manner. Belongs to the neural progenitors-specific chromatin remodeling complex (npBAF complex) and the neuron-specific chromatin remodeling complex (nBAF complex). During neural development a switch from a stem/progenitor to a postmitotic chromatin remodeling mechanism occurs as neurons exit the cell cycle and become committed to their adult state. The transition from proliferating neural stem/progenitor cells to postmitotic neurons requires a switch in subunit composition of the npBAF and nBAF complexes. As neural progenitors exit mitosis and differentiate into neurons, npBAF complexes which contain ACTL6A/BAF53A and PHF10/BAF45A, are exchanged for homologous alternative ACTL6B/BAF53B and DPF1/BAF45B or DPF3/BAF45C subunits in neuron-specific complexes (nBAF). The npBAF complex is essential for the self-renewal/proliferative capacity of the multipotent neural stem cells. The nBAF complex along with CREST plays a role regulating the activity of genes essential for dendrite growth. Binds DNA non-specifically. The sequence is that of AT-rich interactive domain-containing protein 1B from Homo sapiens (Human).